Consider the following 160-residue polypeptide: Putative pre-16S rRNA nuclease (160 aa).

The protein belongs to the YqgF nuclease family.

Its subcellular location is the cytoplasm. Could be a nuclease involved in processing of the 5'-end of pre-16S rRNA. The sequence is that of Putative pre-16S rRNA nuclease from Rhodopseudomonas palustris (strain ATCC BAA-98 / CGA009).